A 434-amino-acid chain; its full sequence is CC-adding tRNA nucleotidyltransferase (434 aa).

19 to 22 (GAVR) lines the CTP pocket. Residues Asp-32 and Asp-34 each contribute to the Mg(2+) site. Residues 90-91 (RD), Asn-95, 130-139 (DHLRSLRGVR), and Arg-175 each bind CTP.

It belongs to the tRNA nucleotidyltransferase/poly(A) polymerase family. Mg(2+) serves as cofactor.

It catalyses the reaction a tRNA precursor + 2 CTP = a tRNA with a 3' CC end + 2 diphosphate. Functionally, tRNA nucleotidyltransferase involved in the synthesis of the tRNA CCA terminus. Adds the two cytidine residues to tRNA. The polypeptide is CC-adding tRNA nucleotidyltransferase (Thermus thermophilus (strain ATCC BAA-163 / DSM 7039 / HB27)).